A 300-amino-acid chain; its full sequence is Manganese-binding lipoprotein MntA (300 aa).

The N-terminal stretch at 1–19 (MKKVCFSFVIMVIALIAAG) is a signal peptide. C20 is lipidated: N-palmitoyl cysteine. The S-diacylglycerol cysteine moiety is linked to residue C20. Mn(2+) is bound by residues H68, H130, E196, and D271.

Belongs to the bacterial solute-binding protein 9 family.

It localises to the cell membrane. Probably part of ATP-binding cassette (ABC) transport system MntABCD involved in manganese import. Binds manganese and delivers it to the membrane permease for translocation into the cytoplasm. This Halalkalibacterium halodurans (strain ATCC BAA-125 / DSM 18197 / FERM 7344 / JCM 9153 / C-125) (Bacillus halodurans) protein is Manganese-binding lipoprotein MntA (mntA).